The chain runs to 119 residues: Large ribosomal subunit protein uL18 (119 aa).

This sequence belongs to the universal ribosomal protein uL18 family. In terms of assembly, part of the 50S ribosomal subunit; part of the 5S rRNA/L5/L18/L25 subcomplex. Contacts the 5S and 23S rRNAs.

In terms of biological role, this is one of the proteins that bind and probably mediate the attachment of the 5S RNA into the large ribosomal subunit, where it forms part of the central protuberance. The protein is Large ribosomal subunit protein uL18 of Ruegeria sp. (strain TM1040) (Silicibacter sp.).